We begin with the raw amino-acid sequence, 347 residues long: Vitellogenin-3 (347 aa).

A signal peptide spans 1–15 (MRGFILALVLALVGA). Asparagine 80 is a glycosylation site (N-linked (GlcNAc...) asparagine). The span at 104–118 (PSATPLSSSSSTDSS) shows a compositional bias: low complexity. Disordered stretches follow at residues 104–174 (PSAT…DKHC) and 200–234 (QDPR…MFLG). A compositionally biased stretch (basic and acidic residues) spans 124–133 (PGNKRDKDEI). Low complexity predominate over residues 144–163 (SSSSSSSSSTGSGSSKTCSS). Basic and acidic residues predominate over residues 164-174 (SREDSSRDKHC). N-linked (GlcNAc...) asparagine glycosylation occurs at asparagine 208. The span at 209–219 (SSISSSSSSSS) shows a compositional bias: low complexity.

Post-translationally, phosvitin, an egg yolk storage protein, is one of the most highly phosphorylated (10%) proteins in nature. Cathepsin D is responsible for intraoocytic processing of vitellogenin. In terms of processing, may contain intrachain disulfide bonds. As to expression, produced by the liver, secreted into the blood and then sequestered by receptor mediated endocytosis into growing oocytes, where it is generally cleaved, giving rise to the respective yolk components.

Precursor of the egg-yolk proteins that are sources of nutrients during early development of oviparous organisms. In terms of biological role, phosvitin is believed to be of importance in sequestering calcium, iron and other cations for the developing embryo. This chain is Vitellogenin-3 (VTG3), found in Gallus gallus (Chicken).